A 734-amino-acid polypeptide reads, in one-letter code: Photosystem I P700 chlorophyll a apoprotein A2 (734 aa).

8 consecutive transmembrane segments (helical) span residues 46 to 69, 135 to 158, 175 to 199, 273 to 291, 330 to 353, 369 to 395, 417 to 439, and 517 to 535; these read IFAS…FHVA, LYAG…LHLQ, LNHH…HVAI, MAHH…GHMY, LHFQ…QHMY, AALY…IFLI, AIIS…LYVH, and FLVH…LILV. [4Fe-4S] cluster is bound by residues Cys559 and Cys568. A run of 2 helical transmembrane segments spans residues 575 to 596 and 643 to 665; these read AFYL…YWHW and LSVW…MFLI. Chlorophyll a is bound by residues His654, Met662, and Tyr670. Trp671 contributes to the phylloquinone binding site. Residues 707–727 traverse the membrane as a helical segment; that stretch reads LVGLAHFSVGYIFTYAAFLIA.

The protein belongs to the PsaA/PsaB family. As to quaternary structure, the PsaA/B heterodimer binds the P700 chlorophyll special pair and subsequent electron acceptors. PSI consists of a core antenna complex that captures photons, and an electron transfer chain that converts photonic excitation into a charge separation. The eukaryotic PSI reaction center is composed of at least 11 subunits. P700 is a chlorophyll a/chlorophyll a' dimer, A0 is one or more chlorophyll a, A1 is one or both phylloquinones and FX is a shared 4Fe-4S iron-sulfur center. is required as a cofactor.

It localises to the plastid. It is found in the chloroplast thylakoid membrane. It carries out the reaction reduced [plastocyanin] + hnu + oxidized [2Fe-2S]-[ferredoxin] = oxidized [plastocyanin] + reduced [2Fe-2S]-[ferredoxin]. In terms of biological role, psaA and PsaB bind P700, the primary electron donor of photosystem I (PSI), as well as the electron acceptors A0, A1 and FX. PSI is a plastocyanin-ferredoxin oxidoreductase, converting photonic excitation into a charge separation, which transfers an electron from the donor P700 chlorophyll pair to the spectroscopically characterized acceptors A0, A1, FX, FA and FB in turn. Oxidized P700 is reduced on the lumenal side of the thylakoid membrane by plastocyanin. This is Photosystem I P700 chlorophyll a apoprotein A2 from Pinus thunbergii (Japanese black pine).